The sequence spans 292 residues: Putative phosphatase MPN_381 (292 aa).

The active-site Nucleophile is aspartate 11. Aspartate 11 provides a ligand contact to Mg(2+). Leucine 12 is a phosphate binding site. Aspartate 13 contributes to the Mg(2+) binding site. Phosphate is bound by residues 60-61 (TG) and lysine 217. Aspartate 242 is a Mg(2+) binding site. Asparagine 245 contributes to the phosphate binding site.

It belongs to the HAD-like hydrolase superfamily. Cof family. It depends on Mg(2+) as a cofactor.

The polypeptide is Putative phosphatase MPN_381 (Mycoplasma pneumoniae (strain ATCC 29342 / M129 / Subtype 1) (Mycoplasmoides pneumoniae)).